Reading from the N-terminus, the 348-residue chain is Serpentine receptor class beta-7 (348 aa).

Transmembrane regions (helical) follow at residues Gln31 to Leu51, Leu63 to Ile83, Gly107 to Phe127, Phe145 to Ile165, Met191 to Leu211, Ile241 to Leu261, and Gly280 to Phe300.

Belongs to the nematode receptor-like protein srb family.

The protein resides in the membrane. This chain is Serpentine receptor class beta-7 (srb-7), found in Caenorhabditis elegans.